The chain runs to 258 residues: uncharacterized protein (258 aa).

This is an uncharacterized protein from Escherichia coli O157:H7.